Consider the following 195-residue polypeptide: Probable GTP-binding protein EngB (195 aa).

Residues 22 to 194 (LKGEVAFVGR…LDLISTLLKE (173 aa)) form the EngB-type G domain. Residues 30–37 (GRSNVGKS), 56–60 (GKTRS), 74–77 (DLPG), 141–144 (TKMD), and 173–175 (TSS) contribute to the GTP site. 2 residues coordinate Mg(2+): serine 37 and threonine 58.

This sequence belongs to the TRAFAC class TrmE-Era-EngA-EngB-Septin-like GTPase superfamily. EngB GTPase family. It depends on Mg(2+) as a cofactor.

Necessary for normal cell division and for the maintenance of normal septation. This Thermotoga sp. (strain RQ2) protein is Probable GTP-binding protein EngB.